The chain runs to 205 residues: 3-demethoxyubiquinol 3-hydroxylase (205 aa).

Fe cation contacts are provided by E54, E84, H87, E136, E168, and H171.

The protein belongs to the COQ7 family. Fe cation serves as cofactor.

The protein resides in the cell membrane. It catalyses the reaction a 5-methoxy-2-methyl-3-(all-trans-polyprenyl)benzene-1,4-diol + AH2 + O2 = a 3-demethylubiquinol + A + H2O. It participates in cofactor biosynthesis; ubiquinone biosynthesis. Functionally, catalyzes the hydroxylation of 2-nonaprenyl-3-methyl-6-methoxy-1,4-benzoquinol during ubiquinone biosynthesis. The polypeptide is 3-demethoxyubiquinol 3-hydroxylase (Paracidovorax citrulli (strain AAC00-1) (Acidovorax citrulli)).